A 451-amino-acid polypeptide reads, in one-letter code: Probable glycine dehydrogenase (decarboxylating) subunit 1 (451 aa).

The protein belongs to the GcvP family. N-terminal subunit subfamily. As to quaternary structure, the glycine cleavage system is composed of four proteins: P, T, L and H. In this organism, the P 'protein' is a heterodimer of two subunits.

The enzyme catalyses N(6)-[(R)-lipoyl]-L-lysyl-[glycine-cleavage complex H protein] + glycine + H(+) = N(6)-[(R)-S(8)-aminomethyldihydrolipoyl]-L-lysyl-[glycine-cleavage complex H protein] + CO2. Its function is as follows. The glycine cleavage system catalyzes the degradation of glycine. The P protein binds the alpha-amino group of glycine through its pyridoxal phosphate cofactor; CO(2) is released and the remaining methylamine moiety is then transferred to the lipoamide cofactor of the H protein. The polypeptide is Probable glycine dehydrogenase (decarboxylating) subunit 1 (Staphylococcus aureus (strain MSSA476)).